Consider the following 481-residue polypeptide: MTFRFDNSYARELEGFYVDWQAAPVPAPRLLRLNRGLAGELGLDADRLEAEGAAIFSGKRLPEGAHPLAQAYAGHQFGGFSPQLGDGRALLIGEVTDRSGRRRDLQLKGSGRTPFSRGADGKATLGPVLREYLVGEAMHGLGIPTTRALAAVATGEPVLRQAGELPGAILTRVAASHIRVGTFQFFAARSDMERVRRLADYAIARHYPALAEAPEPYLAFYEAVADAQADLVARWMLVGFIHGVMNTDNMAISGETIDYGPCAFMEGFDPGTVFSSIDLQGRYAYGNQPFILAWNLARLGEALLPLFDADAGRAAEKANAVLGTVGARYQARWLEGMRAKLGLAGAEEGDLSLAEDLLAAMQGARADWTLTFRRLADAVTEDAALRPVLQGPDTLQSWLSRWRRRLGPEAARRIRAVNPIYIARNHRVEEALAAAHAGDLGPFDRLIGALSDPFTERAGLEDLAQPAPAGFNEGYRTFCGT.

ATP contacts are provided by G85, G87, R88, K108, D120, G121, R172, and R179. Catalysis depends on D248, which acts as the Proton acceptor. Mg(2+) is bound by residues N249 and D258. An ATP-binding site is contributed by D258.

The protein belongs to the SELO family. It depends on Mg(2+) as a cofactor. Mn(2+) serves as cofactor.

It carries out the reaction L-seryl-[protein] + ATP = 3-O-(5'-adenylyl)-L-seryl-[protein] + diphosphate. The catalysed reaction is L-threonyl-[protein] + ATP = 3-O-(5'-adenylyl)-L-threonyl-[protein] + diphosphate. The enzyme catalyses L-tyrosyl-[protein] + ATP = O-(5'-adenylyl)-L-tyrosyl-[protein] + diphosphate. It catalyses the reaction L-histidyl-[protein] + UTP = N(tele)-(5'-uridylyl)-L-histidyl-[protein] + diphosphate. It carries out the reaction L-seryl-[protein] + UTP = O-(5'-uridylyl)-L-seryl-[protein] + diphosphate. The catalysed reaction is L-tyrosyl-[protein] + UTP = O-(5'-uridylyl)-L-tyrosyl-[protein] + diphosphate. Its function is as follows. Nucleotidyltransferase involved in the post-translational modification of proteins. It can catalyze the addition of adenosine monophosphate (AMP) or uridine monophosphate (UMP) to a protein, resulting in modifications known as AMPylation and UMPylation. This is Protein nucleotidyltransferase YdiU from Cereibacter sphaeroides (strain ATCC 17025 / ATH 2.4.3) (Rhodobacter sphaeroides).